The sequence spans 605 residues: IQ domain-containing protein IQM2 (605 aa).

The IQ domain occupies 105–134 (KHEAAIKLQKVYKSFRTRRKLADCAVLVEQ). Residues 408–505 (QDKVDPSGEE…EEGETKESEV (98 aa)) form a disordered region. Residues 425-440 (SISRKQSDLETPEKME) show a composition bias toward basic and acidic residues. Residues 462 to 480 (DYDSGDDEEEEEEMFELEQ) are compositionally biased toward acidic residues. Over residues 481–490 (ESMPSEQSSP) the composition is skewed to low complexity. Positions 491–505 (RGEEKEEGETKESEV) are enriched in basic and acidic residues.

Expressed in rosette and cauline leaves, stems, flowers and siliques, and at lower levels in roots.

The protein resides in the cytoplasm. It localises to the nucleus. Functionally, may be involved in biotic and abiotic stress responses. The protein is IQ domain-containing protein IQM2 of Arabidopsis thaliana (Mouse-ear cress).